A 229-amino-acid chain; its full sequence is Pdp3-interacting factor 1 (229 aa).

D12 acts as the Nucleophile in catalysis. Mg(2+) contacts are provided by D12, D14, and D176. Residue D14 is the Proton donor of the active site.

It belongs to the HAD-like hydrolase superfamily. In terms of assembly, component of the mst2 complex composed of at least eaf6, mst2, nto1, pdp3, ptf1, ptf2 and tfg3. Mg(2+) is required as a cofactor.

It is found in the cytoplasm. It localises to the nucleus. It carries out the reaction D-ribitol 5-phosphate + H2O = ribitol + phosphate. The enzyme catalyses D-sorbitol 6-phosphate + H2O = D-sorbitol + phosphate. The catalysed reaction is sn-glycerol 1-phosphate + H2O = glycerol + phosphate. It catalyses the reaction D-erythrose 4-phosphate + H2O = D-erythrose + phosphate. Functionally, component of the mst2 complex which is a highly specific H3 lysine 14 (H3K14) acetyltransferase that functions together with gcn5 to regulate global levels of H3K14 acetylation (H3K14ac), critical for DNA damage checkpoint activation. Its function is as follows. May also function as a sugar alcohol (polyol) phosphatase that prevents accumulation of toxic levels of polyol phosphates, which can impair glycolysis by inhibiting glucose-6-phosphate isomerase. The protein is Pdp3-interacting factor 1 of Schizosaccharomyces pombe (strain 972 / ATCC 24843) (Fission yeast).